Consider the following 304-residue polypeptide: Coenzyme PQQ synthesis protein B (304 aa).

It belongs to the PqqB family.

The protein operates within cofactor biosynthesis; pyrroloquinoline quinone biosynthesis. In terms of biological role, may be involved in the transport of PQQ or its precursor to the periplasm. This is Coenzyme PQQ synthesis protein B from Gluconobacter oxydans (strain 621H) (Gluconobacter suboxydans).